Reading from the N-terminus, the 197-residue chain is Female-specific protein transformer (197 aa).

Basic and acidic residues-rich tracts occupy residues 1–17 (MKMDADSSGTQHRDSRG) and 24–39 (REREYHGRSSERDSRK). Disordered regions lie at residues 1 to 136 (MKMD…PKII) and 158 to 197 (GYQRLPRPPPFPPAPYRYRQRPPFIGVPRFGYRNAGRPPY). 2 stretches are compositionally biased toward basic residues: residues 58–75 (RRLRQRAHQSTRRTRSRS) and 84–127 (SRHR…RSPH). The span at 163 to 172 (PRPPPFPPAP) shows a compositional bias: pro residues.

The protein resides in the nucleus speckle. In terms of biological role, member of the regulatory pathway controlling female somatic sexual differentiation, regulated by Sxl. Activates dsx female-specific splicing by promoting the formation of a splicing enhancer complex which consists of tra, tra2 and sr proteins. Together with tra-2, plays a role in switching fru splicing from the male-specific pattern to the female-specific pattern through activation of the female-specific fru 5'-splice site. No known function in males. The sequence is that of Female-specific protein transformer (tra) from Drosophila melanogaster (Fruit fly).